A 188-amino-acid polypeptide reads, in one-letter code: Probable nicotinate-nucleotide adenylyltransferase (188 aa).

This sequence belongs to the NadD family.

It carries out the reaction nicotinate beta-D-ribonucleotide + ATP + H(+) = deamido-NAD(+) + diphosphate. The protein operates within cofactor biosynthesis; NAD(+) biosynthesis; deamido-NAD(+) from nicotinate D-ribonucleotide: step 1/1. Catalyzes the reversible adenylation of nicotinate mononucleotide (NaMN) to nicotinic acid adenine dinucleotide (NaAD). This Listeria monocytogenes serovar 1/2a (strain ATCC BAA-679 / EGD-e) protein is Probable nicotinate-nucleotide adenylyltransferase.